Reading from the N-terminus, the 615-residue chain is uncharacterized protein (615 aa).

Composition is skewed to polar residues over residues 1-11, 41-55, and 128-140; these read MSETSSNSPAS, LSQN…SSKV, and TSGS…NAPP. Disordered stretches follow at residues 1-61 and 97-149; these read MSET…QALV and HQNH…KASS. S149 and S152 each carry phosphoserine. A disordered region spans residues 181–217; it reads LIHPEQTDRGLPYAPDEKFHNSGSLKLPKGASLEDLS. S219 and S275 each carry phosphoserine. Disordered regions lie at residues 266–481, 493–565, and 586–615; these read KPLA…KFTG, RLQK…KPSF, and GVET…TEEQ. Residues 272–283 are compositionally biased toward polar residues; the sequence is RQRSTADLTESD. Phosphothreonine is present on residues T276 and T297. Residues 312 to 323 are compositionally biased toward basic and acidic residues; that stretch reads EAEKGFYTKDGE. The segment covering 356–376 has biased composition (low complexity); sequence PSLSSASQPSAASSSSSSEPS. Over residues 505–522 the composition is skewed to polar residues; it reads PNKSKSPSGTKSPASGET. T514 bears the Phosphothreonine mark. S516 carries the post-translational modification Phosphoserine. Positions 586–599 are enriched in basic and acidic residues; it reads GVETRKEVEPKEEA. Over residues 600–615 the composition is skewed to acidic residues; it reads VIPEEDVEVEVETEEQ.

This is an uncharacterized protein from Schizosaccharomyces pombe (strain 972 / ATCC 24843) (Fission yeast).